Here is a 437-residue protein sequence, read N- to C-terminus: Phosphomethylpyrimidine synthase (437 aa).

Residues asparagine 69, methionine 98, tyrosine 127, histidine 163, 185–187 (SRG), 226–229 (DACR), and glutamate 265 contribute to the substrate site. Position 269 (histidine 269) interacts with Zn(2+). Substrate is bound at residue tyrosine 292. Histidine 333 is a binding site for Zn(2+). [4Fe-4S] cluster-binding residues include cysteine 409, cysteine 412, and cysteine 416.

The protein belongs to the ThiC family. [4Fe-4S] cluster serves as cofactor.

It carries out the reaction 5-amino-1-(5-phospho-beta-D-ribosyl)imidazole + S-adenosyl-L-methionine = 4-amino-2-methyl-5-(phosphooxymethyl)pyrimidine + CO + 5'-deoxyadenosine + formate + L-methionine + 3 H(+). It functions in the pathway cofactor biosynthesis; thiamine diphosphate biosynthesis. In terms of biological role, catalyzes the synthesis of the hydroxymethylpyrimidine phosphate (HMP-P) moiety of thiamine from aminoimidazole ribotide (AIR) in a radical S-adenosyl-L-methionine (SAM)-dependent reaction. In Clostridium botulinum (strain Kyoto / Type A2), this protein is Phosphomethylpyrimidine synthase.